The sequence spans 210 residues: MRRNRERMVRQQLMPRGISDEAVLAAMGCVPRHLFVQEALRAQAYEDHPLPIGNGQTISQPFIVAFMSQLLEAKPGMRVLEIGTGSGYQAAVLAEMGLDVYTVERIREIYQTTRDLLRALRYTRIRCRLDDGTLGWPESAPFDRIIVTAGGPEIPVPLVEQLADPGVMVLPVGVSRRSQELVVVRKRDGKLFRSNRGGVSFVDLVGCHGW.

The active site involves Ser59.

Belongs to the methyltransferase superfamily. L-isoaspartyl/D-aspartyl protein methyltransferase family.

Its subcellular location is the cytoplasm. It carries out the reaction [protein]-L-isoaspartate + S-adenosyl-L-methionine = [protein]-L-isoaspartate alpha-methyl ester + S-adenosyl-L-homocysteine. In terms of biological role, catalyzes the methyl esterification of L-isoaspartyl residues in peptides and proteins that result from spontaneous decomposition of normal L-aspartyl and L-asparaginyl residues. It plays a role in the repair and/or degradation of damaged proteins. The sequence is that of Protein-L-isoaspartate O-methyltransferase from Nitratidesulfovibrio vulgaris (strain ATCC 29579 / DSM 644 / CCUG 34227 / NCIMB 8303 / VKM B-1760 / Hildenborough) (Desulfovibrio vulgaris).